Reading from the N-terminus, the 322-residue chain is Phosphatidylserine decarboxylase proenzyme (322 aa).

Catalysis depends on charge relay system; for autoendoproteolytic cleavage activity residues Asp-90, His-147, and Ser-254. Catalysis depends on Ser-254, which acts as the Schiff-base intermediate with substrate; via pyruvic acid; for decarboxylase activity. At Ser-254 the chain carries Pyruvic acid (Ser); by autocatalysis.

The protein belongs to the phosphatidylserine decarboxylase family. PSD-B subfamily. Prokaryotic type I sub-subfamily. As to quaternary structure, heterodimer of a large membrane-associated beta subunit and a small pyruvoyl-containing alpha subunit. Pyruvate is required as a cofactor. Post-translationally, is synthesized initially as an inactive proenzyme. Formation of the active enzyme involves a self-maturation process in which the active site pyruvoyl group is generated from an internal serine residue via an autocatalytic post-translational modification. Two non-identical subunits are generated from the proenzyme in this reaction, and the pyruvate is formed at the N-terminus of the alpha chain, which is derived from the carboxyl end of the proenzyme. The autoendoproteolytic cleavage occurs by a canonical serine protease mechanism, in which the side chain hydroxyl group of the serine supplies its oxygen atom to form the C-terminus of the beta chain, while the remainder of the serine residue undergoes an oxidative deamination to produce ammonia and the pyruvoyl prosthetic group on the alpha chain. During this reaction, the Ser that is part of the protease active site of the proenzyme becomes the pyruvoyl prosthetic group, which constitutes an essential element of the active site of the mature decarboxylase.

The protein localises to the cell membrane. It carries out the reaction a 1,2-diacyl-sn-glycero-3-phospho-L-serine + H(+) = a 1,2-diacyl-sn-glycero-3-phosphoethanolamine + CO2. It participates in phospholipid metabolism; phosphatidylethanolamine biosynthesis; phosphatidylethanolamine from CDP-diacylglycerol: step 2/2. Functionally, catalyzes the formation of phosphatidylethanolamine (PtdEtn) from phosphatidylserine (PtdSer). The chain is Phosphatidylserine decarboxylase proenzyme from Shigella dysenteriae serotype 1 (strain Sd197).